The following is a 360-amino-acid chain: Probable dual-specificity RNA methyltransferase RlmN (360 aa).

Glu-103 serves as the catalytic Proton acceptor. The Radical SAM core domain maps to 109–342 (HEYGNSVCVT…VTIRREQGHD (234 aa)). Cys-116 and Cys-347 are disulfide-bonded. 3 residues coordinate [4Fe-4S] cluster: Cys-123, Cys-127, and Cys-130. S-adenosyl-L-methionine contacts are provided by residues 173–174 (GE), Ser-205, 228–230 (SLH), and Asn-304. The active-site S-methylcysteine intermediate is Cys-347.

The protein belongs to the radical SAM superfamily. RlmN family. [4Fe-4S] cluster serves as cofactor.

The protein resides in the cytoplasm. It catalyses the reaction adenosine(2503) in 23S rRNA + 2 reduced [2Fe-2S]-[ferredoxin] + 2 S-adenosyl-L-methionine = 2-methyladenosine(2503) in 23S rRNA + 5'-deoxyadenosine + L-methionine + 2 oxidized [2Fe-2S]-[ferredoxin] + S-adenosyl-L-homocysteine. It carries out the reaction adenosine(37) in tRNA + 2 reduced [2Fe-2S]-[ferredoxin] + 2 S-adenosyl-L-methionine = 2-methyladenosine(37) in tRNA + 5'-deoxyadenosine + L-methionine + 2 oxidized [2Fe-2S]-[ferredoxin] + S-adenosyl-L-homocysteine. Functionally, specifically methylates position 2 of adenine 2503 in 23S rRNA and position 2 of adenine 37 in tRNAs. The chain is Probable dual-specificity RNA methyltransferase RlmN from Bacillus pumilus (strain SAFR-032).